The following is a 429-amino-acid chain: GDP-fucose protein O-fucosyltransferase 2 (429 aa).

The N-terminal stretch at 1-21 is a signal peptide; it reads MATLSFVFLLLGAVSWPPASA. 53-57 contacts GDP-beta-L-fucose; the sequence is PEGFN. Glu-54 acts as the Proton acceptor in catalysis. Cys-161 and Cys-192 are joined by a disulfide. 3 N-linked (GlcNAc...) asparagine glycosylation sites follow: Asn-189, Asn-209, and Asn-259. GDP-beta-L-fucose contacts are provided by residues 292–294, Asp-371, and 388–389; these read HLR and TF. A disulfide bridge connects residues Cys-412 and Cys-419.

It belongs to the glycosyltransferase 68 family. Isoform A is expressed in fetal liver and peripheral blood lymphocytes. Isoform B is expressed in spleen, lung, testis, bone marrow, thymus, pancreas, prostate, fetal brain, fetal liver and fetal kidney. Isoform C is expressed in brain, heart, spleen, liver, lung, stomach, testis, placenta, skin, thymus, pancreas, mammary gland, prostate, fetal brain, fetal liver and fetal heart.

It is found in the endoplasmic reticulum. It localises to the golgi apparatus. It catalyses the reaction L-seryl-[protein] + GDP-beta-L-fucose = 3-O-(alpha-L-fucosyl)-L-seryl-[protein] + GDP + H(+). The catalysed reaction is L-threonyl-[protein] + GDP-beta-L-fucose = 3-O-(alpha-L-fucosyl)-L-threonyl-[protein] + GDP + H(+). It participates in protein modification; protein glycosylation. With respect to regulation, inhibited by EDTA and by Zn(2+). In terms of biological role, catalyzes the reaction that attaches fucose through an O-glycosidic linkage to a conserved serine or threonine residue in the consensus sequence C1-X-X-S/T-C2 of thrombospondin type I repeats (TSRs) where C1 and C2 are the first and second cysteines of the repeat, respectively. O-fucosylates members of several protein families including the ADAMTS, the thrombospondin (TSP) and spondin families. Required for the proper secretion of ADAMTS family members such as ADAMTSL1 and ADAMTS13. The O-fucosylation of TSRs is also required for restricting epithelial to mesenchymal transition (EMT), maintaining the correct patterning of mesoderm and localization of the definite endoderm. The chain is GDP-fucose protein O-fucosyltransferase 2 (POFUT2) from Homo sapiens (Human).